Here is a 480-residue protein sequence, read N- to C-terminus: Glycerol-3-phosphate transporter (480 aa).

Topologically, residues 1 to 36 (MFGPFKPAPHIAELPAEKIDSTYKRLRWQVFAGIFF) are cytoplasmic. The helical transmembrane segment at 37–57 (GYAAYYFVRANFDLAQPGLIQ) threads the bilayer. Residues 58–64 (AGLYSKA) are Periplasmic-facing. The helical transmembrane segment at 65 to 85 (ELGVIGSAAGLAYGLSKFVMA) threads the bilayer. At 86–94 (GMSDRSNPR) the chain is on the cytoplasmic side. A helical transmembrane segment spans residues 95–113 (VFLPFGLLLSGLCMTLMGL). Topologically, residues 114 to 121 (FPWATSGI) are periplasmic. A helical transmembrane segment spans residues 122 to 142 (AIMWVMIFLNGWFQGMGWPPC). Residues 143-161 (GRTMVHWWSKSERGTIVSI) lie on the Cytoplasmic side of the membrane. The helical transmembrane segment at 162-181 (WNTAHNIGGMVPGAMVLLAS) threads the bilayer. The Periplasmic segment spans residues 182–201 (AIFFSTHGIEAQAKDVWQQS). The chain crosses the membrane as a helical span at residues 202–219 (LYFPGIAAMIFAIPVYFV). The Cytoplasmic portion of the chain corresponds to 220-274 (MRDTPQSCGLPSIEKWRNDYPDDYNEKTYENDLTAKEIFVTYVLKNKLLWYIAIA). Residues 275–295 (NVFVYLIRYGVLKWSPVYLSE) traverse the membrane as a helical segment. Residues 296 to 300 (VKHFN) lie on the Periplasmic side of the membrane. The helical transmembrane segment at 301–321 (IKGTAWAYTIYELAAVPGTLL) threads the bilayer. The Cytoplasmic segment spans residues 322–334 (CGWVSDKVFKGKR). The chain crosses the membrane as a helical span at residues 335–354 (GLTGFIFMILTTAAVVAYWM). The Periplasmic portion of the chain corresponds to 355 to 359 (NPATP). A helical transmembrane segment spans residues 360–396 (EAELANYSAWYENPYQLTDFVLMTLIGFLIYGPVMLI). At 397–415 (GLHALELAPKKAAGTAAGF) the chain is on the cytoplasmic side. A helical membrane pass occupies residues 416 to 437 (TGLFGYLGGTVSASAVIGWAAQ). Over 438–442 (HYGWD) the chain is Periplasmic. A helical transmembrane segment spans residues 443-463 (GGFYVMIGGGVLAVLLLLIVM). The Cytoplasmic portion of the chain corresponds to 464-479 (VEEGKHKAKLGDTYGT).

Belongs to the major facilitator superfamily. Organophosphate:Pi antiporter (OPA) (TC 2.A.1.4) family.

Its subcellular location is the cell inner membrane. In terms of biological role, responsible for glycerol-3-phosphate uptake. This is Glycerol-3-phosphate transporter (glpT) from Haemophilus influenzae (strain ATCC 51907 / DSM 11121 / KW20 / Rd).